The primary structure comprises 244 residues: Cell division protein ZapD (244 aa).

The protein belongs to the ZapD family. As to quaternary structure, interacts with FtsZ.

The protein resides in the cytoplasm. In terms of biological role, cell division factor that enhances FtsZ-ring assembly. Directly interacts with FtsZ and promotes bundling of FtsZ protofilaments, with a reduction in FtsZ GTPase activity. The polypeptide is Cell division protein ZapD (Shewanella oneidensis (strain ATCC 700550 / JCM 31522 / CIP 106686 / LMG 19005 / NCIMB 14063 / MR-1)).